A 518-amino-acid chain; its full sequence is Forkhead box protein H1 (518 aa).

A disordered region spans residues 72–113 (GSMYGLSPGTHEGSCTHTHEGPKDSMAGDQTRSRKSKKKNYH). Positions 104 to 113 (SRKSKKKNYH) are enriched in basic residues. The fork-head DNA-binding region spans 117 to 213 (KPPYSYLAMI…MKLQNTALTR (97 aa)). The tract at residues 318 to 397 (KPTRNARSPG…NYSPIEPPKK (80 aa)) is disordered. Low complexity predominate over residues 329 to 346 (STIHSTYSSSSSSISTIS). Positions 380 to 506 (TSSDPDTGNY…PSFLSQCLGS (127 aa)) are SMAD-interaction domain (SID). The Fast/FoxH1 motif 1 (FM1) signature appears at 405-409 (LPTSY). Residues 415-421 (PNVVAPP) carry the Fast/FoxH1 motif 2 (FM2) motif. Positions 470 to 491 (LDNMLRAMPPNKSVFDVLTSHP) match the SMAD interaction motif (SIM) motif.

ARF1 contains 2 smad2s, 1 smad4 and 1 foxh1/fast-1 protein. Interaction with smad4 is most likely indirect through interaction with the MH2 domain of smad2. Binds to the MH2 domain of smad3, which can incorporate into the ARF1 complex. The ARF1 and ARF2 complexes are activated by distinct TGF-beta family members; formation of ARF1 is promoted by activin. Interacts (via Fork-head domain) with gtf2ird1/wbscr11 (via repeats 4-5). As to expression, highly expressed in the animal cap (prospective ectoderm) and prospective mesoderm of stage 10.25 embryos.

Its subcellular location is the nucleus. In terms of biological role, transcriptional activator. Recognizes and binds to the DNA sequence 5'-TGT[GT][GT]ATT-3'. Upon TGF-beta induction, forms a transcriptionally active complex with smad2 and smad4 called activin-responsive factor 1 (ARF1), which binds a site on the mix-B/mix.2 promoter called the activin response element (ARE). Binds to activated smads and the ARE with much lower affinity than fast3. Necessary for the first steps in mesoderm specification, directly inducing mesodermal genes. Acts with fast3 to control the convergent extension movements of gastrulation. Binds to the proximal element (PE) of the gsc gene and cooperates with gtf2ird1/wbscr11 and SMAD proteins to regulate gsc transcription. This chain is Forkhead box protein H1 (foxh1), found in Xenopus laevis (African clawed frog).